Here is a 247-residue protein sequence, read N- to C-terminus: Flavin-dependent thymidylate synthase (247 aa).

The 237-residue stretch at 1–237 (MRVRLLEATE…PHTFEYYDAE (237 aa)) folds into the ThyX domain. DUMP is bound by residues 85–88 (QLTR), 98–100 (SMR), and Arg-176. 88–90 (RHR) provides a ligand contact to FAD. Residues 88–98 (RHRHASFDVQS) carry the ThyX motif motif. FAD is bound by residues 192–194 (NPR) and His-198. Position 203 (Arg-203) interacts with dUMP. Catalysis depends on Arg-203, which acts as the Involved in ionization of N3 of dUMP, leading to its activation.

It belongs to the thymidylate synthase ThyX family. Homotetramer. FAD is required as a cofactor.

It catalyses the reaction dUMP + (6R)-5,10-methylene-5,6,7,8-tetrahydrofolate + NADPH + H(+) = dTMP + (6S)-5,6,7,8-tetrahydrofolate + NADP(+). It functions in the pathway pyrimidine metabolism; dTTP biosynthesis. Its function is as follows. Catalyzes the reductive methylation of 2'-deoxyuridine-5'-monophosphate (dUMP) to 2'-deoxythymidine-5'-monophosphate (dTMP) while utilizing 5,10-methylenetetrahydrofolate (mTHF) as the methyl donor, and NADPH and FADH(2) as the reductant. The polypeptide is Flavin-dependent thymidylate synthase (Halobacterium salinarum (strain ATCC 700922 / JCM 11081 / NRC-1) (Halobacterium halobium)).